Here is a 236-residue protein sequence, read N- to C-terminus: Large ribosomal subunit protein uL3 (236 aa).

It belongs to the universal ribosomal protein uL3 family. Part of the 50S ribosomal subunit. Forms a cluster with proteins L14 and L19.

One of the primary rRNA binding proteins, it binds directly near the 3'-end of the 23S rRNA, where it nucleates assembly of the 50S subunit. The sequence is that of Large ribosomal subunit protein uL3 from Anaeromyxobacter dehalogenans (strain 2CP-1 / ATCC BAA-258).